The sequence spans 78 residues: Acyl carrier protein (78 aa).

The 76-residue stretch at 2–77 (SDVLERVSKI…DAVKFISEKV (76 aa)) folds into the Carrier domain. Ser-37 is subject to O-(pantetheine 4'-phosphoryl)serine.

Belongs to the acyl carrier protein (ACP) family. 4'-phosphopantetheine is transferred from CoA to a specific serine of apo-ACP by AcpS. This modification is essential for activity because fatty acids are bound in thioester linkage to the sulfhydryl of the prosthetic group.

The protein resides in the cytoplasm. Its pathway is lipid metabolism; fatty acid biosynthesis. Its function is as follows. Carrier of the growing fatty acid chain in fatty acid biosynthesis. In Maricaulis maris (strain MCS10) (Caulobacter maris), this protein is Acyl carrier protein.